The chain runs to 336 residues: Protein DIA1 (336 aa).

The protein resides in the cytoplasm. Involved in regulation of invasive growth. The protein is Protein DIA1 (DIA1) of Saccharomyces cerevisiae (strain ATCC 204508 / S288c) (Baker's yeast).